A 215-amino-acid polypeptide reads, in one-letter code: ER lumen protein-retaining receptor 3 (215 aa).

The Lumenal portion of the chain corresponds to 1–4 (MNIF). A helical membrane pass occupies residues 5–24 (RLSGDVCHLIAIIILFLKIW). The Cytoplasmic portion of the chain corresponds to 25–32 (RSKSCAGI). The helical transmembrane segment at 33–52 (SGKSQVLFALVFTTRYLDLF) threads the bilayer. The segment at 47–48 (RY) is interaction with the K-D-E-L motif on target proteins. Topologically, residues 53-58 (TSYISA) are lumenal. Residues 59–79 (YNTVMKVVYLLLAYSTVGLIF) traverse the membrane as a helical segment. At 80–92 (FRFRNSYDSESDS) the chain is on the cytoplasmic side. The helical transmembrane segment at 93–110 (FRVEFLLVPVAGLSFLEN) threads the bilayer. The Lumenal portion of the chain corresponds to 111-116 (YAFTPL). The helical transmembrane segment at 117-135 (EILWTFSIYLESVAILPQL) threads the bilayer. Topologically, residues 136-149 (FMITKTGEAESITA) are cytoplasmic. A helical membrane pass occupies residues 150–168 (HYLLFLGLYRALYLANWLW). An interaction with the K-D-E-L motif on target proteins region spans residues 159–169 (RALYLANWLWR). Residues 169–178 (RFHTEGFYDQ) are Lumenal-facing. A helical transmembrane segment spans residues 179–199 (IAVVSGVVQTIFYCDFFYLYF). At 200-215 (TRVLRGSGKMSLPMPV) the chain is on the cytoplasmic side. The interval 204-208 (RGSGK) is important for recycling of cargo proteins with the sequence motif K-D-E-L from the Golgi to the endoplasmic reticulum.

It belongs to the ERD2 family.

It is found in the endoplasmic reticulum membrane. It localises to the golgi apparatus membrane. The protein localises to the cytoplasmic vesicle. Its subcellular location is the COPI-coated vesicle membrane. In terms of biological role, receptor for the C-terminal sequence motif K-D-E-L that is present on endoplasmic reticulum resident proteins and that mediates their recycling from the Golgi back to the endoplasmic reticulum. The chain is ER lumen protein-retaining receptor 3 (kdelr3) from Danio rerio (Zebrafish).